The chain runs to 525 residues: Putative ribose/galactose/methyl galactoside import ATP-binding protein (525 aa).

A disordered region spans residues 1-20 (MSGSATASPPAKPDLPSSDG). 2 consecutive ABC transporter domains span residues 33-269 (LEIS…VGRE) and 279-523 (KPAG…SGHR). 65–72 (GENGAGKS) provides a ligand contact to ATP.

The protein belongs to the ABC transporter superfamily. Carbohydrate importer 2 (CUT2) (TC 3.A.1.2) family.

The protein resides in the cell inner membrane. The catalysed reaction is D-ribose(out) + ATP + H2O = D-ribose(in) + ADP + phosphate + H(+). It carries out the reaction D-galactose(out) + ATP + H2O = D-galactose(in) + ADP + phosphate + H(+). Its function is as follows. Part of an ABC transporter complex involved in carbohydrate import. Could be involved in ribose, galactose and/or methyl galactoside import. Responsible for energy coupling to the transport system. This is Putative ribose/galactose/methyl galactoside import ATP-binding protein from Pseudomonas syringae pv. tomato (strain ATCC BAA-871 / DC3000).